The sequence spans 767 residues: Transducin-like enhancer protein 1 (767 aa).

2 disordered regions span residues Met1–Ser26 and Ala200–Ser346. Composition is skewed to basic and acidic residues over residues Ala200–Pro209, Arg235–Asp255, and Asn277–Pro289. The CCN domain stretch occupies residues Ser212 to Ser274. Over residues Pro294 to Ser306 the composition is skewed to low complexity. The span at Leu324 to Ser346 shows a compositional bias: polar residues. WD repeat units lie at residues Gly467–Thr498, Asn525–Asp555, Ser569–Asp599, Gly611–Asp641, Leu693–Arg723, and Lys734–Glu764.

Belongs to the WD repeat Groucho/TLE family. Post-translationally, ubiquitinated by XIAP/BIRC4. Abundantly expressed in brain, lung, testis and ovary in comparison with liver, heart, kidney and spleen. Ubiquitously expressed in the developing embryo. Present in unfertilized and fertilized eggs.

The protein resides in the nucleus. Its function is as follows. Nuclear effector molecule. This Xenopus laevis (African clawed frog) protein is Transducin-like enhancer protein 1 (esg1).